The following is an 81-amino-acid chain: Protein Vpu (81 aa).

The Extracellular portion of the chain corresponds to 1–7; sequence MQSLQIL. A helical transmembrane segment spans residues 8–28; sequence AIVSLVVVAIIAIVVWTIVLI. Residues 29-81 lie on the Cytoplasmic side of the membrane; sequence EYRKILRQRKIDRLFDRIREKAEDSGNESERDQEELSALVEMGHLAPWDVDDL. A phosphoserine; by host CK2 mark is found at Ser53 and Ser57.

This sequence belongs to the HIV-1 VPU protein family. As to quaternary structure, homopentamer. Interacts with host CD4 and BRTC; these interactions induce proteasomal degradation of CD4. Interacts with host BST2; this interaction leads to the degradation of host BST2. Interacts with host FBXW11. Interacts with host AP1M1; this interaction plays a role in the mistrafficking and subsequent degradation of host BST2. Interacts with host RANBP2; this interaction allows Vpu to down-regulate host BLM sumoylation. Phosphorylated by host CK2. This phosphorylation is necessary for interaction with human BTRC and degradation of CD4.

It is found in the host membrane. With respect to regulation, ion channel activity is inhibited by hexamethylene amiloride in vitro. Enhances virion budding by targeting host CD4 and Tetherin/BST2 to proteasome degradation. Degradation of CD4 prevents any unwanted premature interactions between viral Env and its host receptor CD4 in the endoplasmic reticulum. Degradation of antiretroviral protein Tetherin/BST2 is important for virion budding, as BST2 tethers new viral particles to the host cell membrane. Mechanistically, Vpu bridges either CD4 or BST2 to BTRC, a substrate recognition subunit of the Skp1/Cullin/F-box protein E3 ubiquitin ligase, induces their ubiquitination and subsequent proteasomal degradation. The alteration of the E3 ligase specificity by Vpu seems to promote the degradation of host IKBKB, leading to NF-kappa-B down-regulation and subsequent apoptosis. Acts as a viroporin that forms an oligomeric ion channel in membranes. Modulates the host DNA repair mechanisms to promote degradation of nuclear viral cDNA in cells that are already productively infected in order to suppress immune sensing and proviral hyper-integration (superinfection). Manipulates PML-NBs and modulates SUMOylation of host BLM protein thereby enhancing its DNA-end processing activity toward viral unintegrated linear DNA. Also inhibits RAD52-mediated homologous repair of viral cDNA, preventing the generation of dead-end circular forms of single copies of the long terminal repeat and permitting sustained nucleolytic attack. The sequence is that of Protein Vpu from Homo sapiens (Human).